The sequence spans 156 residues: 3-hydroxyacyl-[acyl-carrier-protein] dehydratase FabZ (156 aa).

The active site involves His54.

The protein belongs to the thioester dehydratase family. FabZ subfamily.

It is found in the cytoplasm. It catalyses the reaction a (3R)-hydroxyacyl-[ACP] = a (2E)-enoyl-[ACP] + H2O. Its function is as follows. Involved in unsaturated fatty acids biosynthesis. Catalyzes the dehydration of short chain beta-hydroxyacyl-ACPs and long chain saturated and unsaturated beta-hydroxyacyl-ACPs. The protein is 3-hydroxyacyl-[acyl-carrier-protein] dehydratase FabZ of Koribacter versatilis (strain Ellin345).